The primary structure comprises 443 residues: Probable D-serine dehydratase (443 aa).

Residue lysine 116 is modified to N6-(pyridoxal phosphate)lysine.

This sequence belongs to the serine/threonine dehydratase family. DsdA subfamily. Pyridoxal 5'-phosphate serves as cofactor.

The catalysed reaction is D-serine = pyruvate + NH4(+). The protein is Probable D-serine dehydratase of Bacillus cereus (strain B4264).